The primary structure comprises 302 residues: Sulfate adenylyltransferase subunit 2 (302 aa).

The protein belongs to the PAPS reductase family. CysD subfamily. As to quaternary structure, heterodimer composed of CysD, the smaller subunit, and CysN.

It carries out the reaction sulfate + ATP + H(+) = adenosine 5'-phosphosulfate + diphosphate. The protein operates within sulfur metabolism; hydrogen sulfide biosynthesis; sulfite from sulfate: step 1/3. Its function is as follows. With CysN forms the ATP sulfurylase (ATPS) that catalyzes the adenylation of sulfate producing adenosine 5'-phosphosulfate (APS) and diphosphate, the first enzymatic step in sulfur assimilation pathway. APS synthesis involves the formation of a high-energy phosphoric-sulfuric acid anhydride bond driven by GTP hydrolysis by CysN coupled to ATP hydrolysis by CysD. This chain is Sulfate adenylyltransferase subunit 2, found in Pectobacterium carotovorum subsp. carotovorum (strain PC1).